The sequence spans 376 residues: ATP phosphoribosyltransferase regulatory subunit (376 aa).

It belongs to the class-II aminoacyl-tRNA synthetase family. HisZ subfamily. In terms of assembly, heteromultimer composed of HisG and HisZ subunits.

It is found in the cytoplasm. Its pathway is amino-acid biosynthesis; L-histidine biosynthesis; L-histidine from 5-phospho-alpha-D-ribose 1-diphosphate: step 1/9. In terms of biological role, required for the first step of histidine biosynthesis. May allow the feedback regulation of ATP phosphoribosyltransferase activity by histidine. The sequence is that of ATP phosphoribosyltransferase regulatory subunit from Brucella anthropi (strain ATCC 49188 / DSM 6882 / CCUG 24695 / JCM 21032 / LMG 3331 / NBRC 15819 / NCTC 12168 / Alc 37) (Ochrobactrum anthropi).